We begin with the raw amino-acid sequence, 1070 residues long: MCFSFIMPPAMADILDIWAVDSQIASDGSIPVDFLLPTGIYIQLEVPREATISYIKQMLWKQVHNYPMFNLLMDIDSYMFACVNQTAVYEELEDETRRLCDVRPFLPVLKLVTRSCDPGEKLDSKIGVLIGKGLHEFDSLKDPEVNEFRRKMRKFSEEKILSLVGLSWMDWLKQTYPPEHEPSIPENLEDKLYGGKLIVAVHFENCQDVFSFQVSPNMNPIKVNELAIQKRLTIHGKEDEVSPYDYVLQVSGRVEYVFGDHPLIQFQYIRNCVMNRALPHFILVECCKIKKMYEQEMIAIEAAINRNSSNLPLPLPPKKTRIISHVWENNNPFQIVLVKGNKLNTEETVKVHVRAGLFHGTELLCKTIVSSEVSGKNDHIWNEPLEFDINICDLPRMARLCFAVYAVLDKVKTKKSTKTINPSKYQTIRKAGKVHYPVAWVNTMVFDFKGQLRTGDIILHSWSSFPDELEEMLNPMGTVQTNPYTENATALHVKFPENKKQPYYYPPFDKIIEKAAEIASSDSANVSSRGGKKFLPVLKEILDRDPLSQLCENEMDLIWTLRQDCREIFPQSLPKLLLSIKWNKLEDVAQLQALLQIWPKLPPREALELLDFNYPDQYVREYAVGCLRQMSDEELSQYLLQLVQVLKYEPFLDCALSRFLLERALGNRRIGQFLFWHLRSEVHIPAVSVQFGVILEAYCRGSVGHMKVLSKQVEALNKLKTLNSLIKLNAVKLNRAKGKEAMHTCLKQSAYREALSDLQSPLNPCVILSELYVEKCKYMDSKMKPLWLVYNNKVFGEDSVGVIFKNGDDLRQDMLTLQMLRLMDLLWKEAGLDLRMLPYGCLATGDRSGLIEVVSTSETIADIQLNSSNVAAAAAFNKDALLNWLKEYNSGDDLDRAIEEFTLSCAGYCVASYVLGIGDRHSDNIMVKKTGQLFHIDFGHILGNFKSKFGIKRERVPFILTYDFIHVIQQGKTGNTEKFGRFRQCCEDAYLILRRHGNLFITLFALMLTAGLPELTSVKDIQYLKDSLALGKSEEEALKQFKQKFDEALRESWTTKVNWMAHTVRKDYRS.

Residues 26 to 115 (SDGSIPVDFL…LPVLKLVTRS (90 aa)) enclose the PI3K-ABD domain. The 92-residue stretch at 194 to 285 (GGKLIVAVHF…RALPHFILVE (92 aa)) folds into the PI3K-RBD domain. Residue Ser-324 is modified to Phosphoserine. The 170-residue stretch at 327-496 (WENNNPFQIV…NATALHVKFP (170 aa)) folds into the C2 PI3K-type domain. The short motif at 410–418 (KVKTKKSTK) is the Nuclear localization signal element. The region spanning 524 to 701 (ANVSSRGGKK…GVILEAYCRG (178 aa)) is the PIK helical domain. Residues 772–1053 (YVEKCKYMDS…KFDEALRESW (282 aa)) enclose the PI3K/PI4K catalytic domain. Residues 778 to 784 (YMDSKMK) form a G-loop region. The interval 916 to 924 (GIGDRHSDN) is catalytic loop. The activation loop stretch occupies residues 935–961 (HIDFGHILGNFKSKFGIKRERVPFILT). Ser-1070 bears the Phosphoserine; by autocatalysis mark.

It belongs to the PI3/PI4-kinase family. Heterodimer of a catalytic subunit PIK3CB and a p85 regulatory subunit (PIK3R1, PIK3R2 or PIK3R3). Interaction with PIK3R2 is required for nuclear localization and nuclear export. Part of a complex with PIK3R1 and PTEN. Binding to PTEN may antagonize the lipid kinase activity under normal growth conditions. Part of a complex involved in autophagosome formation composed of PIK3C3 and PIK3R4. Interacts with BECN1, ATG14 and RAB5A. Autophosphorylation at Ser-1070 negatively regulates the phosphatidylinositol-4,5-bisphosphate 3-kinase activity. Expressed ubiquitously.

The protein resides in the cytoplasm. It is found in the nucleus. It carries out the reaction a 1,2-diacyl-sn-glycero-3-phospho-(1D-myo-inositol-4,5-bisphosphate) + ATP = a 1,2-diacyl-sn-glycero-3-phospho-(1D-myo-inositol-3,4,5-trisphosphate) + ADP + H(+). It catalyses the reaction 1-octadecanoyl-2-(5Z,8Z,11Z,14Z)-eicosatetraenoyl-sn-glycero-3-phospho-1D-myo-inositol 4,5-bisphosphate + ATP = 1-octadecanoyl-2-(5Z,8Z,11Z,14Z-eicosatetraenoyl)-sn-glycero-3-phospho-(1D-myo-inositol 3,4,5-triphosphate) + ADP + H(+). The enzyme catalyses L-seryl-[protein] + ATP = O-phospho-L-seryl-[protein] + ADP + H(+). Its pathway is phospholipid metabolism; phosphatidylinositol phosphate biosynthesis. Its function is as follows. Phosphoinositide-3-kinase (PI3K) phosphorylates phosphatidylinositol derivatives at position 3 of the inositol ring to produce 3-phosphoinositides. Uses ATP and PtdIns(4,5)P2 (phosphatidylinositol 4,5-bisphosphate) to generate phosphatidylinositol 3,4,5-trisphosphate (PIP3). PIP3 plays a key role by recruiting PH domain-containing proteins to the membrane, including AKT1 and PDPK1, activating signaling cascades involved in cell growth, survival, proliferation, motility and morphology. Involved in the activation of AKT1 upon stimulation by G-protein coupled receptors (GPCRs) ligands such as CXCL12, sphingosine 1-phosphate, and lysophosphatidic acid. May also act downstream receptor tyrosine kinases. Required in different signaling pathways for stable platelet adhesion and aggregation. Plays a role in platelet activation signaling triggered by GPCRs, alpha-IIb/beta-3 integrins (ITGA2B/ ITGB3) and ITAM (immunoreceptor tyrosine-based activation motif)-bearing receptors such as GP6. Regulates the strength of adhesion of ITGA2B/ ITGB3 activated receptors necessary for the cellular transmission of contractile forces. Required for platelet aggregation induced by F2 (thrombin) and thromboxane A2 (TXA2). Has a role in cell survival. May have a role in cell migration. Involved in the early stage of autophagosome formation. Modulates the intracellular level of PtdIns3P (phosphatidylinositol 3-phosphate) and activates PIK3C3 kinase activity. May act as a scaffold, independently of its lipid kinase activity to positively regulate autophagy. May have a role in insulin signaling as scaffolding protein in which the lipid kinase activity is not required. May have a kinase-independent function in regulating cell proliferation and in clathrin-mediated endocytosis. Mediator of oncogenic signal in cell lines lacking PTEN. The lipid kinase activity is necessary for its role in oncogenic transformation. Required for the growth of ERBB2 and RAS driven tumors. Also has a protein kinase activity showing autophosphorylation. In Homo sapiens (Human), this protein is Phosphatidylinositol 4,5-bisphosphate 3-kinase catalytic subunit beta isoform (PIK3CB).